Consider the following 492-residue polypeptide: Coagulation factor X (492 aa).

A signal peptide spans 1–23; that stretch reads MAGLLHLVLLSTALGGLLRPAGS. Positions 24–40 are excised as a propeptide; that stretch reads VFLPRDQAHRVLQRARR. The Gla domain occupies 41 to 85; it reads ANSFLEEVKQGNLERECLEEACSLEEAREVFEDAEQTDEFWSKYK. 4-carboxyglutamate is present on residues E46, E47, E54, E56, E59, E60, E65, E66, E69, E72, E75, and E79. An intrachain disulfide couples C57 to C62. One can recognise an EGF-like 1; calcium-binding domain in the interval 86–122; sequence DGDQCEGHPCLNQGHCKDGIGDYTCTCAEGFEGKNCE. Disulfide bonds link C90/C101, C95/C110, C112/C121, C129/C140, C136/C149, C151/C164, C172/C341, C240/C245, C260/C276, C389/C403, and C414/C442. Position 103 is a (3R)-3-hydroxyaspartate (D103). The EGF-like 2 domain occupies 125–165; sequence TREICSLDNGGCDQFCREERSEVRCSCAHGYVLGDDSKSCV. The propeptide at 183–233 is activation peptide; sequence WAIHTSEDALDASELEHYDPADLSPTESSLDLLGLNRTEPSAGEDGSQVVR. Residue Y200 is modified to Sulfotyrosine. T208 is a glycosylation site (O-linked (GalNAc...) threonine). A glycan (N-linked (GlcNAc...) asparagine) is linked at N218. Positions 234 to 466 constitute a Peptidase S1 domain; that stretch reads IVGGRDCAEG…FLKWIDKIMK (233 aa). Active-site charge relay system residues include H275 and D321. Catalysis depends on S418, which acts as the Charge relay system. The tract at residues 472–492 is disordered; the sequence is AGSRGHSEAPATWTVPPPLPL. Positions 476–492 are cleaved as a propeptide — may be removed but is not necessary for activation; it reads GHSEAPATWTVPPPLPL. The O-linked (GalNAc...) threonine glycan is linked to T485.

The protein belongs to the peptidase S1 family. The two chains are formed from a single-chain precursor by the excision of two Arg residues and are held together by 1 or more disulfide bonds. Forms a heterodimer with SERPINA5. Interacts (activated) with guianensin, an anticoagulant protein from Simulium guianense saliva. Interacts (activated) with simukunin, an anticoagulant protein from Simulium vittatum saliva. The vitamin K-dependent, enzymatic carboxylation of some glutamate residues allows the modified protein to bind calcium. Post-translationally, N- and O-glycosylated. In terms of processing, proteolytically cleaved and activated by cathepsin CTSG. The activation peptide is cleaved by factor IXa (in the intrinsic pathway), or by factor VIIa (in the extrinsic pathway). The iron and 2-oxoglutarate dependent 3-hydroxylation of aspartate and asparagine is (R) stereospecific within EGF domains.

It is found in the secreted. It catalyses the reaction Selective cleavage of Arg-|-Thr and then Arg-|-Ile bonds in prothrombin to form thrombin.. With respect to regulation, inhibited by SERPINA5. Its function is as follows. Factor Xa is a vitamin K-dependent glycoprotein that converts prothrombin to thrombin in the presence of factor Va, calcium and phospholipid during blood clotting. Factor Xa activates pro-inflammatory and pro-fibrotic signaling pathways in a protease-activated receptor (PAR)-dependent manner. In Bos taurus (Bovine), this protein is Coagulation factor X (F10).